The following is a 414-amino-acid chain: Enolase (414 aa).

Gln162 is a (2R)-2-phosphoglycerate binding site. Catalysis depends on Glu204, which acts as the Proton donor. Residues Asp239, Glu280, and Asp307 each contribute to the Mg(2+) site. 4 residues coordinate (2R)-2-phosphoglycerate: Lys332, Arg361, Ser362, and Lys383. The active-site Proton acceptor is Lys332.

Belongs to the enolase family. Requires Mg(2+) as cofactor.

It is found in the cytoplasm. The protein localises to the secreted. Its subcellular location is the cell surface. The catalysed reaction is (2R)-2-phosphoglycerate = phosphoenolpyruvate + H2O. It functions in the pathway carbohydrate degradation; glycolysis; pyruvate from D-glyceraldehyde 3-phosphate: step 4/5. Functionally, catalyzes the reversible conversion of 2-phosphoglycerate (2-PG) into phosphoenolpyruvate (PEP). It is essential for the degradation of carbohydrates via glycolysis. In Campylobacter jejuni (strain RM1221), this protein is Enolase.